We begin with the raw amino-acid sequence, 309 residues long: tRNA pseudouridine synthase B (309 aa).

Asp39 serves as the catalytic Nucleophile. The region spanning 229–306 (LPRVVVHQES…ERVLTLRKVF (78 aa)) is the PUA domain.

The protein belongs to the pseudouridine synthase TruB family. Type 1 subfamily.

It catalyses the reaction uridine(55) in tRNA = pseudouridine(55) in tRNA. Its function is as follows. Responsible for synthesis of pseudouridine from uracil-55 in the psi GC loop of transfer RNAs. This Thermotoga petrophila (strain ATCC BAA-488 / DSM 13995 / JCM 10881 / RKU-1) protein is tRNA pseudouridine synthase B.